A 577-amino-acid chain; its full sequence is Arginine--tRNA ligase (577 aa).

The short motif at 122-132 (PNVAKEMHVGH) is the 'HIGH' region element.

This sequence belongs to the class-I aminoacyl-tRNA synthetase family. As to quaternary structure, monomer.

The protein resides in the cytoplasm. The enzyme catalyses tRNA(Arg) + L-arginine + ATP = L-arginyl-tRNA(Arg) + AMP + diphosphate. The chain is Arginine--tRNA ligase from Shigella flexneri.